Here is a 130-residue protein sequence, read N- to C-terminus: Small ribosomal subunit protein uS9 (130 aa).

Belongs to the universal ribosomal protein uS9 family.

In Xanthomonas oryzae pv. oryzae (strain MAFF 311018), this protein is Small ribosomal subunit protein uS9.